Consider the following 96-residue polypeptide: Co-chaperonin GroES 2 (96 aa).

This sequence belongs to the GroES chaperonin family. As to quaternary structure, heptamer of 7 subunits arranged in a ring. Interacts with the chaperonin GroEL.

It localises to the cytoplasm. Its function is as follows. Together with the chaperonin GroEL, plays an essential role in assisting protein folding. The GroEL-GroES system forms a nano-cage that allows encapsulation of the non-native substrate proteins and provides a physical environment optimized to promote and accelerate protein folding. GroES binds to the apical surface of the GroEL ring, thereby capping the opening of the GroEL channel. This is Co-chaperonin GroES 2 from Vibrio parahaemolyticus serotype O3:K6 (strain RIMD 2210633).